We begin with the raw amino-acid sequence, 296 residues long: Protease HtpX homolog (296 aa).

Helical transmembrane passes span 14–34 (VVLLIVFFCLLAAIGAAVGYL) and 39–59 (YQFGLVLALIIGVIYAVSMIF). Histidine 143 contacts Zn(2+). Glutamate 144 is an active-site residue. Residue histidine 147 participates in Zn(2+) binding. The next 2 helical transmembrane spans lie at 158–178 (IAVALASAVTLISSIGSRMLF) and 195–215 (ILVLIFSILSLILAPLAASLV). Residue glutamate 224 participates in Zn(2+) binding.

It belongs to the peptidase M48B family. The cofactor is Zn(2+).

The protein localises to the cell membrane. The sequence is that of Protease HtpX homolog from Streptococcus agalactiae serotype III (strain NEM316).